Here is a 147-residue protein sequence, read N- to C-terminus: Orcokinin peptides (147 aa).

The first 27 residues, 1–27 (MPRHSVFALSILALSITATVWIPTVQA), serve as a signal peptide directing secretion. 2 consecutive propeptides follow at residues 28 to 89 (ETNL…ERFG) and 146 to 147 (FG).

It belongs to the orcokinin family.

It is found in the secreted. In terms of biological role, myotropic peptides. The chain is Orcokinin peptides from Apis mellifera (Honeybee).